We begin with the raw amino-acid sequence, 275 residues long: Ribosomal RNA small subunit methyltransferase A (275 aa).

6 residues coordinate S-adenosyl-L-methionine: N21, L23, G48, E69, D94, and N115.

The protein belongs to the class I-like SAM-binding methyltransferase superfamily. rRNA adenine N(6)-methyltransferase family. RsmA subfamily.

It is found in the cytoplasm. The catalysed reaction is adenosine(1518)/adenosine(1519) in 16S rRNA + 4 S-adenosyl-L-methionine = N(6)-dimethyladenosine(1518)/N(6)-dimethyladenosine(1519) in 16S rRNA + 4 S-adenosyl-L-homocysteine + 4 H(+). Specifically dimethylates two adjacent adenosines (A1518 and A1519) in the loop of a conserved hairpin near the 3'-end of 16S rRNA in the 30S particle. May play a critical role in biogenesis of 30S subunits. The sequence is that of Ribosomal RNA small subunit methyltransferase A from Clostridium botulinum (strain Kyoto / Type A2).